Consider the following 454-residue polypeptide: Phenylalanine--tRNA ligase, mitochondrial (454 aa).

Residues 141–144 (SAHQ), Arg163, 170–172 (VHY), 177–179 (QME), Glu266, and Phe291 contribute to the substrate site. The interval 327 to 347 (KSISTSSSSSSSSSSSSSSTL) is disordered. The span at 328 to 347 (SISTSSSSSSSSSSSSSSTL) shows a compositional bias: low complexity. The FDX-ACB domain maps to 361–454 (SKYPSCFKDV…LENHLSVKLR (94 aa)).

It belongs to the class-II aminoacyl-tRNA synthetase family. In terms of assembly, monomer.

Its subcellular location is the mitochondrion matrix. The enzyme catalyses tRNA(Phe) + L-phenylalanine + ATP = L-phenylalanyl-tRNA(Phe) + AMP + diphosphate + H(+). Functionally, is responsible for the charging of tRNA(Phe) with phenylalanine in mitochondrial translation. The protein is Phenylalanine--tRNA ligase, mitochondrial (mpheS) of Dictyostelium discoideum (Social amoeba).